We begin with the raw amino-acid sequence, 693 residues long: DNA-directed RNA polymerase subunit beta' (693 aa).

Zn(2+)-binding residues include cysteine 76, cysteine 78, cysteine 94, and cysteine 97. The Mg(2+) site is built by aspartate 496, aspartate 498, and aspartate 500.

This sequence belongs to the RNA polymerase beta' chain family. RpoC1 subfamily. In terms of assembly, in plastids the minimal PEP RNA polymerase catalytic core is composed of four subunits: alpha, beta, beta', and beta''. When a (nuclear-encoded) sigma factor is associated with the core the holoenzyme is formed, which can initiate transcription. The cofactor is Mg(2+). Requires Zn(2+) as cofactor.

It is found in the plastid. It localises to the chloroplast. The enzyme catalyses RNA(n) + a ribonucleoside 5'-triphosphate = RNA(n+1) + diphosphate. Functionally, DNA-dependent RNA polymerase catalyzes the transcription of DNA into RNA using the four ribonucleoside triphosphates as substrates. This is DNA-directed RNA polymerase subunit beta' from Nuphar advena (Common spatterdock).